A 240-amino-acid chain; its full sequence is Uridylate kinase (240 aa).

13 to 16 serves as a coordination point for ATP; it reads KFSG. Glycine 55 contributes to the UMP binding site. ATP-binding residues include glycine 56 and arginine 60. Residues aspartate 76 and 137-144 each bind UMP; that span reads TGNPFFTT. ATP is bound by residues threonine 164, tyrosine 170, and aspartate 173.

The protein belongs to the UMP kinase family. Homohexamer.

It localises to the cytoplasm. The enzyme catalyses UMP + ATP = UDP + ADP. The protein operates within pyrimidine metabolism; CTP biosynthesis via de novo pathway; UDP from UMP (UMPK route): step 1/1. Its activity is regulated as follows. Inhibited by UTP. Functionally, catalyzes the reversible phosphorylation of UMP to UDP. The polypeptide is Uridylate kinase (Helicobacter pylori (strain HPAG1)).